The sequence spans 136 residues: Flagellar assembly factor FliW 2 (136 aa).

The protein belongs to the FliW family. In terms of assembly, interacts with translational regulator CsrA and flagellin(s).

The protein resides in the cytoplasm. Its function is as follows. Acts as an anti-CsrA protein, binds CsrA and prevents it from repressing translation of its target genes, one of which is flagellin. Binds to flagellin and participates in the assembly of the flagellum. This chain is Flagellar assembly factor FliW 2, found in Wolinella succinogenes (strain ATCC 29543 / DSM 1740 / CCUG 13145 / JCM 31913 / LMG 7466 / NCTC 11488 / FDC 602W) (Vibrio succinogenes).